Reading from the N-terminus, the 134-residue chain is Small ribosomal subunit protein uS8 (134 aa).

Belongs to the universal ribosomal protein uS8 family. In terms of assembly, part of the 30S ribosomal subunit. Contacts proteins S5 and S12.

Functionally, one of the primary rRNA binding proteins, it binds directly to 16S rRNA central domain where it helps coordinate assembly of the platform of the 30S subunit. The sequence is that of Small ribosomal subunit protein uS8 from Thermosipho africanus (strain TCF52B).